A 210-amino-acid chain; its full sequence is Transcription factor ALC (210 aa).

The disordered stretch occupies residues 1 to 49 (MGDSDVGDRLPPPSSSDELSSFLRQILSRTPTAQPSSPPKSTNVSSAET). Over residues 27–48 (LSRTPTAQPSSPPKSTNVSSAE) the composition is skewed to polar residues. The region spanning 93–142 (IDAQFHNLSEKKRRSKINEKMKALQKLIPNSNKTDKASMLDEAIEYLKQL) is the bHLH domain.

Homodimer. As to expression, expressed constitutively in roots, leaves, stems, and flowers. Confined to the valve margins of the silique.

The protein localises to the nucleus. In terms of biological role, required for the dehiscence of fruit, especially for the separation of the valve cells from the replum. Promotes the differentiation of a strip of labile nonlignified cells sandwiched between layers of lignified cells. This is Transcription factor ALC (ALC) from Arabidopsis thaliana (Mouse-ear cress).